We begin with the raw amino-acid sequence, 64 residues long: MRCLPVFIILLLLIPSAPSVDAQPKTEDDVPLASLHDNAKLTLQGLWDKRCCPNLFYCCPDRRK.

A signal peptide spans 1–22 (MRCLPVFIILLLLIPSAPSVDA). The propeptide occupies 23 to 48 (QPKTEDDVPLASLHDNAKLTLQGLWD).

Belongs to the conotoxin T superfamily. Post-translationally, contains 2 disulfide bonds that can be either 'C1-C3, C2-C4' or 'C1-C4, C2-C3', since these disulfide connectivities have been observed for conotoxins with cysteine framework V (for examples, see AC P0DQQ7 and AC P81755). As to expression, expressed by the venom duct.

Its subcellular location is the secreted. This Conus leopardus (Leopard cone) protein is Conotoxin Leo-T1.